The chain runs to 556 residues: MTPTMKSIARRKALLIALSIFAVTFILWNGFPGSSNRPLPSSNDEFHYEDIELPSGYRSEGEVVDLLNPKDELEEPLFSEEPLFPVTTSIPTKTAVSKPKIAPTSAAKDVTFSSSIDSDDCSVAYDNSKPVRQYVLMIDAGSTGSRVHVYQFNNCNPSPKLEEEFFKMIEPGLSSFAGDPEGAAASLDPLLDYAMENVPEEYRRCSPIAVKATAGLRLTGESEAKAILKSVRQHLENDYPFPIVKDGVSILEGSMEGIYAWITINYLLGTLGGKATHSTVAVMDLGGASTQLVFEPRFASDGESLVDGDHKYVLDYNGEQYELYQHSHLGYGLKEARKLIHKFVLNNAEALKESLELLGDSTSIIHPCLHLNASLTHPDSKSEASEVVFVGPSLAHLSLQCRGIAEKALYKDKNCPVRPCSFNGVHQPKFTETFTDSPIYLISYFYDRMISLGMPSTFTIEDMKYLANSVCSGPTYWQDAFSLTDALKELKEEPEWCLDLNYMISLLSVGYEIPNNRQLHTAKKIDNKELGWCLGASLSMLSEQNNGWNCNVKEEI.

Residues 1–12 lie on the Cytoplasmic side of the membrane; the sequence is MTPTMKSIARRK. A helical; Signal-anchor for type II membrane protein transmembrane segment spans residues 13–33; it reads ALLIALSIFAVTFILWNGFPG. Over 34 to 556 the chain is Lumenal; it reads SSNRPLPSSN…GWNCNVKEEI (523 aa). The active-site Proton acceptor is glutamate 256. N-linked (GlcNAc...) asparagine glycosylation is present at asparagine 372.

It belongs to the GDA1/CD39 NTPase family. Ca(2+) is required as a cofactor. The cofactor is Mn(2+).

Its subcellular location is the golgi apparatus membrane. It catalyses the reaction GDP + H2O = GMP + phosphate + H(+). It participates in protein modification; protein glycosylation. Its function is as follows. After transfer of sugars to endogenous macromolecular acceptors, the enzyme converts nucleoside diphosphates to nucleoside monophosphates which in turn exit the Golgi lumen in a coupled antiporter reaction, allowing entry of additional nucleotide sugar from the cytosol. The protein is Guanosine-diphosphatase (gdp1) of Schizosaccharomyces pombe (strain 972 / ATCC 24843) (Fission yeast).